Consider the following 123-residue polypeptide: Small ribosomal subunit protein uS12 (123 aa).

A disordered region spans residues 1–28 (MPTIQQLIRKPREPKRVRSKSQHLESCP). 3-methylthioaspartic acid is present on Asp-89.

This sequence belongs to the universal ribosomal protein uS12 family. As to quaternary structure, part of the 30S ribosomal subunit. Contacts proteins S8 and S17. May interact with IF1 in the 30S initiation complex.

Functionally, with S4 and S5 plays an important role in translational accuracy. Its function is as follows. Interacts with and stabilizes bases of the 16S rRNA that are involved in tRNA selection in the A site and with the mRNA backbone. Located at the interface of the 30S and 50S subunits, it traverses the body of the 30S subunit contacting proteins on the other side and probably holding the rRNA structure together. The combined cluster of proteins S8, S12 and S17 appears to hold together the shoulder and platform of the 30S subunit. The sequence is that of Small ribosomal subunit protein uS12 from Cereibacter sphaeroides (strain ATCC 17029 / ATH 2.4.9) (Rhodobacter sphaeroides).